The following is a 394-amino-acid chain: Elongation factor Tu (394 aa).

The region spanning 10-205 is the tr-type G domain; that stretch reads KPHMNVGTIG…SMDNYFDLPE (196 aa). Residues 19 to 26 form a G1 region; the sequence is GHVDHGKT. 19–26 contacts GTP; it reads GHVDHGKT. Residue Thr26 participates in Mg(2+) binding. Residues 61 to 65 are G2; sequence GITIN. The tract at residues 82–85 is G3; that stretch reads DCPG. GTP-binding positions include 82-86 and 137-140; these read DCPGH and NKLD. Residues 137–140 form a G4 region; it reads NKLD. A G5 region spans residues 173–175; that stretch reads SAF.

This sequence belongs to the TRAFAC class translation factor GTPase superfamily. Classic translation factor GTPase family. EF-Tu/EF-1A subfamily. As to quaternary structure, monomer.

It localises to the cytoplasm. The catalysed reaction is GTP + H2O = GDP + phosphate + H(+). In terms of biological role, GTP hydrolase that promotes the GTP-dependent binding of aminoacyl-tRNA to the A-site of ribosomes during protein biosynthesis. In Borreliella burgdorferi (strain ATCC 35210 / DSM 4680 / CIP 102532 / B31) (Borrelia burgdorferi), this protein is Elongation factor Tu.